The following is a 3014-amino-acid chain: Genome polyprotein (3014 aa).

An N-acetylserine; by host modification is found at S2. The segment at 2-23 is interaction with STAT1; sequence STNPKPQRKTKRNTNRRPQDVK. Residues 2-58 are interaction with EIF2AK2/PKR; that stretch reads STNPKPQRKTKRNTNRRPQDVKFPGGGQIVGGVYLLPRRGPKLGVRATRKNSERSQP. The segment at 2-59 is interaction with DDX3X; sequence STNPKPQRKTKRNTNRRPQDVKFPGGGQIVGGVYLLPRRGPKLGVRATRKNSERSQPR. The segment at 2-75 is disordered; the sequence is STNPKPQRKT…PKARRPTGRS (74 aa). Residues 2 to 168 are Cytoplasmic-facing; sequence STNPKPQRKT…EDGINYATGN (167 aa). Short sequence motifs (nuclear localization signal) lie at residues 5-13 and 38-43; these read PKPQRKTKR and PRRGPK. The span at 7–16 shows a compositional bias: basic residues; it reads PQRKTKRNTN. S53 is subject to Phosphoserine; by host. 2 short sequence motifs (nuclear localization signal) span residues 58-64 and 66-71; these read PRGRRQP and PKARRP. Basic residues predominate over residues 58–72; sequence PRGRRQPIPKARRPT. Phosphoserine; by host occurs at positions 99 and 116. Residues 112–152 are important for endoplasmic reticulum and mitochondrial localization; sequence PRRKSPNLGRVIHTLTCGFPHLMGYIPLVGGPVGGVSRALA. The tract at residues 122 to 173 is interaction with APOA2; that stretch reads VIHTLTCGFPHLMGYIPLVGGPVGGVSRALAHGVKVLEDGINYATGNLPGCP. Positions 164–167 are important for lipid droplets localization; it reads YATG. Residues 169–189 traverse the membrane as a helical segment; sequence LPGCPFSIFVLALLWCLTVPA. A propeptide spans 178 to 191 (ER anchor for the core protein, removed in mature form by host signal peptidase); sequence VLALLWCLTVPASA. The Lumenal segment spans residues 190–358; the sequence is SAVPYRNASG…AGGHWGVLLA (169 aa). N-linked (GlcNAc...) asparagine; by host glycosylation is found at N196, N209, and N234. An important for fusion region spans residues 265–296; it reads LAGGAAFCSALYVGDACGALSLVGQMFTYKPR. N-linked (GlcNAc...) asparagine; by host glycosylation occurs at N305. Residues 359-379 form a helical membrane-spanning segment; the sequence is AAYFASTANWAKVILVLFLFA. At 380–726 the chain is on the lumenal side; that stretch reads GVDGRTHTVG…WEYIMLVFLL (347 aa). Positions 385 to 412 are HVR1; it reads THTVGGTVGQGLKSLTSFFNPGPQRQLQ. N417, N423, and N430 each carry an N-linked (GlcNAc...) (high mannose) asparagine; by host glycan. Disulfide bonds link C429–C553, C452–C459, C487–C495, and C504–C509. Residue N448 is glycosylated (N-linked (GlcNAc...) asparagine; by host). The tract at residues 475-479 is HVR2; sequence ATISG. Residues 481–494 form a CD81-binding 1 region; that stretch reads SDDKPYCWHYPPRP. An N-linked (GlcNAc...) asparagine; by host glycan is attached at N533. The tract at residues 545 to 552 is CD81-binding 2; it reads PPAGNWFG. A glycan (N-linked (GlcNAc...) asparagine; by host) is linked at N557. C565 and C570 form a disulfide bridge. A glycan (N-linked (GlcNAc...) asparagine; by host) is linked at N578. 3 cysteine pairs are disulfide-bonded: C582-C586, C598-C621, and C608-C645. N624 and N646 each carry an N-linked (GlcNAc...) (high mannose) asparagine; by host glycan. C653 and C678 form a disulfide bridge. The segment at 661–672 is PKR/eIF2-alpha phosphorylation homology domain (PePHD); the sequence is AELSPLLHTTTQ. The chain crosses the membrane as a helical span at residues 727-747; sequence LADARICTCLLILLLICQAEA. Residues 748-758 are Lumenal-facing; sequence TCKNVIVLNAA. The chain crosses the membrane as a helical span at residues 759-779; it reads AAAGNHGFFWGLLVVCLAWHV. The Cytoplasmic segment spans residues 780-783; that stretch reads KGRL. A helical membrane pass occupies residues 784–804; that stretch reads VPGATYLCLGVWPLLLVRLLR. Topologically, residues 805–814 are lumenal; sequence PHRALALDSS. A helical transmembrane segment spans residues 815–835; sequence DGGTVGCLVLIVLTIFTLTPG. Topologically, residues 836–882 are cytoplasmic; sequence YKKKVVLVMWWLQYFIARVEAIIHVWVPPLQVKGGRDAVIMLTCLFH. A helical membrane pass occupies residues 883–903; sequence PALGFEITKILFGILGPLYLL. Residues 904-929 lie on the Lumenal side of the membrane; it reads QHSLTKVPYFLRARALLRLCLLAKHL. The Peptidase C18 domain maps to 904–1027; that stretch reads QHSLTKVPYF…DIKTSGWRLL (124 aa). Positions 905 to 1207 are protease NS2-3; that stretch reads HSLTKVPYFL…PVENLETTMR (303 aa). C923 carries S-palmitoyl cysteine; by host lipidation. Residues 930–950 traverse the membrane as a helical segment; sequence VYGKYVQAALLHLGRLTGTYI. An interaction with host SCPS1 region spans residues 930–950; the sequence is VYGKYVQAALLHLGRLTGTYI. The Cytoplasmic segment spans residues 951–1658; the sequence is YDHLAPMKDW…CMSADLEVIT (708 aa). Residues H953, E973, and C994 each act as for protease NS2 activity; shared with dimeric partner in the active site. The region spanning 1028–1209 is the Peptidase S29 domain; it reads APITAYAQQT…ENLETTMRSP (182 aa). Catalysis depends on charge relay system; for serine protease NS3 activity residues H1084 and D1108. The Zn(2+) site is built by C1124 and C1126. Catalysis depends on S1166, which acts as the Charge relay system; for serine protease NS3 activity. Residues C1172 and H1176 each contribute to the Zn(2+) site. The region spanning 1218 to 1351 is the Helicase ATP-binding domain; it reads PAVPHEFQVG…ARLVVLATAI (134 aa). 1231–1238 is an ATP binding site; that stretch reads APTGSGKS. Mg(2+) contacts are provided by S1238 and E1318. The DECH box signature appears at 1317-1320; that stretch reads DECH. Residues 1362–1539 form the Helicase C-terminal domain; the sequence is NIEEVALPSE…DLTPAETTVR (178 aa). The tract at residues 1487–1499 is RNA-binding; sequence QRRGRTGRGRHGI. A helical membrane pass occupies residues 1659-1679; the sequence is STWVLVGGVVAALAAYCLTVG. Positions 1680-1691 are NS3-binding; that stretch reads SVAIVGRIILSG. The Cytoplasmic portion of the chain corresponds to 1680–1806; the sequence is SVAIVGRIIL…AVTSPLTTHQ (127 aa). The chain crosses the membrane as a helical span at residues 1807-1827; it reads TLLFNILGGWVASQIAPPTAA. The Lumenal portion of the chain corresponds to 1828–1829; the sequence is TA. The chain crosses the membrane as a helical span at residues 1830-1850; the sequence is FVVSGMAGAAVGNIGLGRVLI. D1851 is a topological domain (cytoplasmic). Residues 1852-1872 traverse the membrane as a helical segment; it reads ILAGYGTGVAGALVAFKIMCG. The Lumenal portion of the chain corresponds to 1873-1882; that stretch reads ERPTAEELVN. Residues 1883–1903 traverse the membrane as a helical segment; the sequence is LLPSILCPGALVVGVICAAVL. Topologically, residues 1904–1973 are cytoplasmic; it reads RRHIGPGEGA…WIGEDYSTPC (70 aa). C1973 carries the S-palmitoyl cysteine; by host lipid modification. The stretch at 1974–2003 is an intramembrane region; the sequence is DGTWLRAIWDWVCTALTDFKAWLQAKLLPQ. Residues 2004–2993 lie on the Cytoplasmic side of the membrane; the sequence is LPGVPFFSCQ…YHSMSRARPR (990 aa). 4 residues coordinate Zn(2+): C2012, C2030, C2032, and C2053. An FKBP8-binding region spans residues 2121 to 2209; it reads EFFTELDGVR…ANSSASQLSA (89 aa). A transcriptional activation region spans residues 2121–2334; sequence EFFTELDGVR…VPLPRRKRKP (214 aa). Residues 2136–2140 are interaction with non-structural protein 4A; sequence PPCNP. The segment at 2190–2441 is interaction with host SKP2; that stretch reads RLNRGSPPSL…ALITPCSAEE (252 aa). S2195, S2198, S2202, S2205, S2208, and S2211 each carry phosphoserine; by host. Positions 2211 to 2250 are ISDR; it reads SLKATCTIQGHHPDADLIKANLLWRQCMGGNITRVEAENK. The segment at 2211–2276 is interaction with EIF2AK2/PKR; that stretch reads SLKATCTIQG…REISVSADCF (66 aa). The NS4B-binding stretch occupies residues 2250-2307; sequence KVEILDCFKPLKEEEDDREISVSADCFKKGPAFPPALPVWARPGYDPPLLETWKRPDY. The segment at 2300–2378 is V3; sequence ETWKRPDYDP…GTSSQHDSGP (79 aa). Disordered regions lie at residues 2315–2342 and 2359–2412; these read CPIP…DSTV and PSIE…GSWS. A compositionally biased stretch (pro residues) spans 2316-2327; the sequence is PIPPAGPPPVPL. The SH3-binding signature appears at 2323 to 2326; the sequence is PPVP. The short motif at 2328–2337 is the Nuclear localization signal element; that stretch reads PRRKRKPMEL. The segment covering 2361–2375 has biased composition (polar residues); it reads IEGQDSALGTSSQHD. Positions 2376–2385 are enriched in basic and acidic residues; sequence SGPEEKRDDN. S2465 bears the Phosphoserine; by host mark. In terms of domain architecture, RdRp catalytic spans 2637-2755; it reads PMAFSYDTRC…ICESQGTHED (119 aa). Residues D2643, D2741, and D2742 each contribute to the Mg(2+) site. A helical membrane pass occupies residues 2994–3014; the sequence is NLLLCLLLLSVGVGIFLLPAR.

The protein belongs to the hepacivirus polyprotein family. Homooligomer. Interacts with E1 (via C-terminus). Interacts with the non-structural protein 5A. Interacts (via N-terminus) with host STAT1 (via SH2 domain); this interaction results in decreased STAT1 phosphorylation and ubiquitin-mediated proteasome-dependent STAT1 degradation, leading to decreased IFN-stimulated gene transcription. Interacts with host STAT3; this interaction constitutively activates STAT3. Interacts with host LTBR receptor. Interacts with host TNFRSF1A receptor and possibly induces apoptosis. Interacts with host HNRPK. Interacts with host YWHAE. Interacts with host UBE3A/E6AP. Interacts with host DDX3X. Interacts with host APOA2. Interacts with host RXRA protein. Interacts with host SP110 isoform 3/Sp110b; this interaction sequesters the transcriptional corepressor SP110 away from the nucleus. Interacts with host CREB3 nuclear transcription protein; this interaction triggers cell transformation. Interacts with host ACY3. Interacts with host C1QR1. Interacts with host RBM24; this interaction, which enhances the interaction of the mature core protein with 5'-UTR, may inhibit viral translation and favor replication. Interacts with host EIF2AK2/PKR; this interaction induces the autophosphorylation of EIF2AK2. Part of the viral assembly initiation complex composed of NS2, E1, E2, NS3, NS4A, NS5A and the mature core protein. In terms of assembly, forms a heterodimer with envelope glycoprotein E2. Interacts with mature core protein. Interacts with protease NS2. The heterodimer E1/E2 interacts with host CLDN1; this interaction plays a role in viral entry into host cell. Interacts with host SPSB2 (via C-terminus). Part of the viral assembly initiation complex composed of NS2, E1, E2, NS3, NS4A, NS5A and the mature core protein. Interacts with host NEURL3; this interaction prevents E1 binding to glycoprotein E2. As to quaternary structure, forms a heterodimer with envelope glycoprotein E1. Interacts with host CD81 and SCARB1 receptors; these interactions play a role in viral entry into host cell. Interacts with host EIF2AK2/PKR; this interaction inhibits EIF2AK2 and probably allows the virus to evade the innate immune response. Interacts with host CD209/DC-SIGN and CLEC4M/DC-SIGNR. Interact with host SPCS1; this interaction is essential for viral particle assembly. Interacts with protease NS2. The heterodimer E1/E2 interacts with host CLDN1; this interaction plays a role in viral entry into host cell. Part of the viral assembly initiation complex composed of NS2, E1, E2, NS3, NS4A, NS5A and the mature core protein. Interacts with host SLC3A2/4F2hc; the interaction may facilitate viral entry into host cell. Interacts with human PLSCR1. Homohexamer. Homoheptamer. Interacts with protease NS2. In terms of assembly, homodimer. Interacts with host SPCS1; this interaction is essential for viral particle assembly. Interacts with envelope glycoprotein E1. Interacts with envelope glycoprotein E2. Interacts with viroporin p7. Interacts with serine protease/helicase NS3. Part of the replication complex composed of NS2, NS3, NS4A, NS4B, NS5A and the RNA-directed RNA polymerase embedded in an ER-derived membranous web. Part of the viral assembly initiation complex composed of NS2, E1, E2, NS3, NS4A, NS5A and the mature core protein. As to quaternary structure, interacts with protease NS2. Interacts with non-structural protein 4A; this interaction stabilizes the folding of NS3 serine protease. NS3-NS4A interaction is essential for NS3 activation and allows membrane anchorage of the latter. NS3/NS4A complex also prevents phosphorylation of host IRF3, thus preventing the establishment of dsRNA induced antiviral state. Interacts with host MAVS; this interaction leads to the cleavage and inhibition of host MAVS. Interacts with host TICAM1; this interaction leads to the cleavage and inhibition of host TICAM1. Interacts with host TANK-binding kinase/TBK1; this interaction results in the inhibition of the association between TBK1 and IRF3, which leads to the inhibition of IRF3 activation. Interacts with host RBM24. Part of the replication complex composed of NS2, NS3, NS4A, NS4B, NS5A and the RNA-directed RNA polymerase embedded in an ER-derived membranous web. Part of the viral assembly initiation complex composed of NS2, E1, E2, NS3, NS4A, NS5A and the mature core protein. Interacts with NS3 serine protease; this interaction stabilizes the folding of NS3 serine protease. NS3-NS4A interaction is essential for NS3 activation and allows membrane anchorage of the latter. Interacts with non-structural protein 5A (via N-terminus). Part of the replication complex composed of NS2, NS3, NS4A, NS4B, NS5A and the RNA-directed RNA polymerase embedded in an ER-derived membranous web. Part of the viral assembly initiation complex composed of NS2, E1, E2, NS3, NS4A, NS5A and the mature core protein. In terms of assembly, homomultimer. Interacts with non-structural protein NS5A. Interacts with host PLA2G4C; this interaction likely initiates the recruitment of replication complexes to lipid droplets. Interacts with host STING; this interaction disrupts the interaction between STING and TBK1 thereby suppressing the interferon signaling. Part of the replication complex composed of NS2, NS3, NS4A, NS4B, NS5A and the RNA-directed RNA polymerase embedded in an ER-derived membranous web. As to quaternary structure, monomer. Homodimer; dimerization is required for RNA-binding. Interacts with the mature core protein. Interacts (via N-terminus) with non-structural protein 4A. Interacts with non-structural protein 4B. Interacts (via region D2) with RNA-directed RNA polymerase. Part of the viral assembly initiation complex composed of NS2, E1, E2, NS3, NS4A, NS5A and the mature core protein. Part of the replication complex composed of NS2, NS3, NS4A, NS4B, NS5A and the RNA-directed RNA polymerase embedded in an ER-derived membranous web. Interacts with host GRB2. Interacts with host BIN1. Interacts with host PIK3R1. Interacts with host SRCAP. Interacts with host FKBP8. Interacts (via C-terminus) with host VAPB (via MSP domain). Interacts with host EIF2AK2/PKR; this interaction leads to disruption of EIF2AK2 dimerization by NS5A and probably allows the virus to evade the innate immune response. Interacts (via N-terminus) with host PACSIN2 (via N-terminus); this interaction attenuates protein kinase C alpha-mediated phosphorylation of PACSIN2 by disrupting the interaction between PACSIN2 and PRKCA. Interacts (via N-terminus) with host SRC kinase (via SH2 domain). Interacts with most Src-family kinases. Interacts with host IFI27 and SKP2; promotes the ubiquitin-mediated proteasomal degradation of NS5A. Interacts with host GPS2. Interacts with host TNFRSF21; this interaction allows the modulation by the virus of JNK, p38 MAPK, STAT3, and Akt signaling pathways in a DR6-dependent manner. Interacts (via N-terminus) with host CIDEB (via N-terminus); this interaction seems to regulate the association of HCV particles with APOE. Interacts with host CHKA/Choline Kinase-alpha; CHKA bridges host PI4KA and NS5A and potentiates NS5A-stimulated PI4KA activity, which then facilitates the targeting of the ternary complex to the ER for viral replication. Interacts with host SPSB2 (via C-terminus); this interaction targets NS5A for ubiquitination and degradation. Interacts with host RAB18; this interaction may promote the association of NS5A and other replicase components with lipid droplets. Interacts (via region D2) with host PPIA/CYPA; the interaction stimulates RNA-binding ability of NS5A and is dependent on the peptidyl-prolyl cis-trans isomerase activity of PPIA/CYPA. Interacts with host TRIM14; this interaction induces the degradation of NS5A. Homooligomer. Interacts with non-structural protein 5A. Interacts with host VAPB. Interacts with host PRK2/PKN2. Interacts with host HNRNPA1 and SEPT6; these interactions facilitate viral replication. Part of the replication complex composed of NS2, NS3, NS4A, NS4B, NS5A and the RNA-directed RNA polymerase. It depends on Zn(2+) as a cofactor. Mg(2+) is required as a cofactor. In terms of processing, specific enzymatic cleavages in vivo yield mature proteins. The structural proteins, core, E1, E2 and p7 are produced by proteolytic processing by host signal peptidases. The core protein precursor is synthesized as a 23 kDa, which is retained in the ER membrane through the hydrophobic signal peptide. Cleavage by the signal peptidase releases the 21 kDa mature core protein. The cleavage of the core protein precursor occurs between aminoacids 176 and 188 but the exact cleavage site is not known. Some degraded forms of the core protein appear as well during the course of infection. The other proteins (p7, NS2, NS3, NS4A, NS4B, NS5A and NS5B) are cleaved by the viral proteases. Autoprocessing between NS2 and NS3 is mediated by the NS2 cysteine protease catalytic domain and regulated by the NS3 N-terminal domain. Phosphorylated by host PKC and PKA. Post-translationally, ubiquitinated; mediated by UBE3A and leading to core protein subsequent proteasomal degradation. In terms of processing, highly N-glycosylated. Palmitoylation is required for NS2/3 autoprocessing and E2 recruitment to membranes. Post-translationally, palmitoylated. This modification may play a role in its polymerization or in protein-protein interactions. In terms of processing, phosphorylated on serines in a basal form termed p56. p58 is a hyperphosphorylated form of p56. p56 and p58 coexist in the cell in roughly equivalent amounts. Hyperphosphorylation is dependent on the presence of NS4A. Host CSNK1A1/CKI-alpha or RPS6KB1 kinases may be responsible for NS5A phosphorylation. Tyrosine phosphorylation is essential for the interaction with host SRC. Post-translationally, the N-terminus is phosphorylated by host PRK2/PKN2.

It is found in the host endoplasmic reticulum membrane. Its subcellular location is the host mitochondrion membrane. It localises to the virion. The protein localises to the host cytoplasm. The protein resides in the host nucleus. It is found in the host lipid droplet. Its subcellular location is the virion membrane. It localises to the host mitochondrion. The protein localises to the host cell membrane. The protein resides in the host perinuclear region. It catalyses the reaction Hydrolysis of four peptide bonds in the viral precursor polyprotein, commonly with Asp or Glu in the P6 position, Cys or Thr in P1 and Ser or Ala in P1'.. The catalysed reaction is a ribonucleoside 5'-triphosphate + H2O = a ribonucleoside 5'-diphosphate + phosphate + H(+). It carries out the reaction ATP + H2O = ADP + phosphate + H(+). The enzyme catalyses RNA(n) + a ribonucleoside 5'-triphosphate = RNA(n+1) + diphosphate. Inhibited by the antiviral drug hexamethylene amiloride. Inhibition by amantadine appears to be genotype-dependent. Also inhibited by long-alkyl-chain iminosugar derivatives. With respect to regulation, activity is up-regulated by PRK2/PKN2-mediated phosphorylation. Functionally, packages viral RNA to form a viral nucleocapsid, and promotes virion budding. Participates in the viral particle production as a result of its interaction with the non-structural protein 5A. Binds RNA and may function as a RNA chaperone to induce the RNA structural rearrangements taking place during virus replication. Modulates viral translation initiation by interacting with viral IRES and 40S ribosomal subunit. Affects various cell signaling pathways, host immunity and lipid metabolism. Prevents the establishment of cellular antiviral state by blocking the interferon-alpha/beta (IFN-alpha/beta) and IFN-gamma signaling pathways and by blocking the formation of phosphorylated STAT1 and promoting ubiquitin-mediated proteasome-dependent degradation of STAT1. Activates STAT3 leading to cellular transformation. Regulates the activity of cellular genes, including c-myc and c-fos. May repress the promoter of p53, and sequester CREB3 and SP110 isoform 3/Sp110b in the cytoplasm. Represses cell cycle negative regulating factor CDKN1A, thereby interrupting an important check point of normal cell cycle regulation. Targets transcription factors involved in the regulation of inflammatory responses and in the immune response: suppresses TNF-induced NF-kappa-B activation, and activates AP-1. Binds to dendritic cells (DCs) via C1QR1, resulting in down-regulation of T-lymphocytes proliferation. Alters lipid metabolism by interacting with hepatocellular proteins involved in lipid accumulation and storage. Induces up-regulation of FAS promoter activity, and thereby contributes to the increased triglyceride accumulation in hepatocytes (steatosis). Forms a heterodimer with envelope glycoprotein E2, which mediates virus attachment to the host cell, virion internalization through clathrin-dependent endocytosis and fusion with host membrane. Fusion with the host cell is most likely mediated by both E1 and E2, through conformational rearrangements of the heterodimer required for fusion rather than a classical class II fusion mechanism. E1/E2 heterodimer binds host apolipoproteins such as APOB and ApoE thereby forming a lipo-viro-particle (LVP). APOE associated to the LVP allows the initial virus attachment to cell surface receptors such as the heparan sulfate proteoglycans (HSPGs), syndecan-1 (SDC1), syndecan-1 (SDC2), the low-density lipoprotein receptor (LDLR) and scavenger receptor class B type I (SCARB1). The cholesterol transfer activity of SCARB1 allows E2 exposure and binding of E2 to SCARB1 and the tetraspanin CD81. E1/E2 heterodimer binding on CD81 activates the epithelial growth factor receptor (EGFR) signaling pathway. Diffusion of the complex E1-E2-EGFR-SCARB1-CD81 to the cell lateral membrane allows further interaction with Claudin 1 (CLDN1) and occludin (OCLN) to finally trigger HCV entry. Its function is as follows. Forms a heterodimer with envelope glycoprotein E1, which mediates virus attachment to the host cell, virion internalization through clathrin-dependent endocytosis and fusion with host membrane. Fusion with the host cell is most likely mediated by both E1 and E2, through conformational rearrangements of the heterodimer required for fusion rather than a classical class II fusion mechanism. The interaction between envelope glycoprotein E2 and host apolipoprotein E/APOE allows the proper assembly, maturation and infectivity of the viral particles. This interaction is probably promoted via the up-regulation of cellular autophagy by the virus. E1/E2 heterodimer binds host apolipoproteins such as APOB and APOE thereby forming a lipo-viro-particle (LVP). APOE associated to the LVP allows the initial virus attachment to cell surface receptors such as the heparan sulfate proteoglycans (HSPGs), syndecan-1 (SDC1), syndecan-1 (SDC2), the low-density lipoprotein receptor (LDLR) and scavenger receptor class B type I (SCARB1). The cholesterol transfer activity of SCARB1 allows E2 exposure and binding of E2 to SCARB1 and the tetraspanin CD81. E1/E2 heterodimer binding on CD81 activates the epithelial growth factor receptor (EGFR) signaling pathway. Diffusion of the complex E1-E2-EGFR-SCARB1-CD81 to the cell lateral membrane allows further interaction with Claudin 1 (CLDN1) and occludin (OCLN) to finally trigger HCV entry. Inhibits host EIF2AK2/PKR activation, preventing the establishment of an antiviral state. Viral ligand for CD209/DC-SIGN and CLEC4M/DC-SIGNR, which are respectively found on dendritic cells (DCs), and on liver sinusoidal endothelial cells and macrophage-like cells of lymph node sinuses. These interactions allow the capture of circulating HCV particles by these cells and subsequent facilitated transmission to permissive cells such as hepatocytes and lymphocyte subpopulations. The interaction between E2 and host amino acid transporter complex formed by SLC3A2 and SLC7A5/LAT1 may facilitate viral entry into host cell. In terms of biological role, ion channel protein that acts as a viroporin and plays an essential role in the assembly, envelopment and secretion of viral particles. Regulates the host cell secretory pathway, which induces the intracellular retention of viral glycoproteins and favors assembly of viral particles. Creates a pore in acidic organelles and releases Ca(2+) and H(+) in the cytoplasm of infected cells, leading to a productive viral infection. High levels of cytoplasmic Ca(2+) may trigger membrane trafficking and transport of viral ER-associated proteins to viroplasms, sites of viral genome replication. This ionic imbalance induces the assembly of the inflammasome complex, which triggers the maturation of pro-IL-1beta into IL-1beta through the action of caspase-1. Targets also host mitochondria and induces mitochondrial depolarization. In addition of its role as a viroporin, acts as a lipid raft adhesion factor. Functionally, cysteine protease required for the proteolytic auto-cleavage between the non-structural proteins NS2 and NS3. The N-terminus of NS3 is required for the function of NS2 protease (active region NS2-3). Promotes the initiation of viral particle assembly by mediating the interaction between structural and non-structural proteins. Displays three enzymatic activities: serine protease with a chymotrypsin-like fold, NTPase and RNA helicase. NS3 serine protease, in association with NS4A, is responsible for the cleavages of NS3-NS4A, NS4A-NS4B, NS4B-NS5A and NS5A-NS5B. The NS3/NS4A complex prevents phosphorylation of host IRF3, thus preventing the establishment of dsRNA induced antiviral state. The NS3/NS4A complex induces host amino acid transporter component SLC3A2, thus contributing to HCV propagation. NS3 RNA helicase binds to RNA and unwinds both dsDNA and dsRNA in the 3' to 5' direction, and likely resolves RNA complicated stable secondary structures in the template strand. Binds a single ATP and catalyzes the unzipping of a single base pair of dsRNA. Inhibits host antiviral proteins TBK1 and IRF3 thereby preventing the establishment of an antiviral state. Cleaves host MAVS/CARDIF thereby preventing the establishment of an antiviral state. Cleaves host TICAM1/TRIF, thereby disrupting TLR3 signaling and preventing the establishment of an antiviral state. Its function is as follows. Induces a specific membrane alteration that serves as a scaffold for the virus replication complex. This membrane alteration gives rise to the so-called ER-derived membranous web that contains the replication complex. NS4B self-interaction contributes to its function in membranous web formation. Promotes host TRIF protein degradation in a CASP8-dependent manner thereby inhibiting host TLR3-mediated interferon signaling. Disrupts the interaction between STING and TBK1 contributing to the inhibition of interferon signaling. In terms of biological role, phosphorylated protein that is indispensable for viral replication and assembly. Both hypo- and hyperphosphorylated states are required for the viral life cycle. The hyperphosphorylated form of NS5A is an inhibitor of viral replication. Involved in RNA-binding and especially in binding to the viral genome. Zinc is essential for RNA-binding. Participates in the viral particle production as a result of its interaction with the mature viral core protein. Its interaction with host VAPB may target the viral replication complex to vesicles. Down-regulates viral IRES translation initiation. Mediates interferon resistance, presumably by interacting with and inhibiting host EIF2AK2/PKR. Prevents BIN1-induced apoptosis. Acts as a transcriptional activator of some host genes important for viral replication when localized in the nucleus. Via the interaction with host PACSIN2, modulates lipid droplet formation in order to promote virion assembly. Modulates TNFRSF21/DR6 signaling pathway for viral propagation. Functionally, RNA-dependent RNA polymerase that performs primer-template recognition and RNA synthesis during viral replication. Initiates RNA transcription/replication at a flavin adenine dinucleotide (FAD), resulting in a 5'- FAD cap on viral RNAs. In this way, recognition of viral 5' RNA by host pattern recognition receptors can be bypassed, thereby evading activation of antiviral pathways. In Hepatitis C virus genotype 5a (isolate EUH1480) (HCV), this protein is Genome polyprotein.